The following is a 690-amino-acid chain: MKRLPLLVVFSTLLNCSYTQNCTKTPCLPNAKCEIRNGIEACYCNMGFSGNGVTICEDDNECGNLTQSCGENANCTNTEGSYYCMCVPGFRSSSNQDRFITNDGTVCIENVNANCHLDNVCIAANINKTLTKIRSIKEPVALLQEVYRNSVTDLSPTDIITYIEILAESSSLLGYKNNTISAKDTLSNSTLTEFVKTVNNFVQRDTFVVWDKLSVNHRRTHLTKLMHTVEQATLRISQSFQKTTEFDTNSTDIALKVFFFDSYNMKHIHPHMNMDGDYINIFPKRKAAYDSNGNVAVAFVYYKSIGPLLSSSDNFLLKPQNYDNSEEEERVISSVISVSMSSNPPTLYELEKITFTLSHRKVTDRYRSLCAFWNYSPDTMNGSWSSEGCELTYSNETHTSCRCNHLTHFAILMSSGPSIGIKDYNILTRITQLGIIISLICLAICIFTFWFFSEIQSTRTTIHKNLCCSLFLAELVFLVGINTNTNKLFCSIIAGLLHYFFLAAFAWMCIEGIHLYLIVVGVIYNKGFLHKNFYIFGYLSPAVVVGFSAALGYRYYGTTKVCWLSTENNFIWSFIGPACLIILVNLLAFGVIIYKVFRHTAGLKPEVSCFENIRSCARGALALLFLLGTTWIFGVLHVVHASVVTAYLFTVSNAFQGMFIFLFLCVLSRKIQEEYYRLFKNVPCCFGCLR.

Positions Met-1 to Thr-19 are cleaved as a signal peptide. One can recognise an EGF-like 1 domain in the interval Gln-20 to Glu-57. The Extracellular segment spans residues Gln-20–Gln-432. N-linked (GlcNAc...) asparagine glycosylation occurs at Asn-21. Cystine bridges form between Cys-22-Cys-33, Cys-27-Cys-42, Cys-44-Cys-56, Cys-62-Cys-75, Cys-69-Cys-84, and Cys-86-Cys-107. Residues Asp-58–Ile-108 form the EGF-like 2; calcium-binding domain. Residues Asn-64 and Asn-74 are each glycosylated (N-linked (GlcNAc...) asparagine). Residues Asn-127, Asn-177, Asn-188, Asn-249, Asn-381, and Asn-395 are each glycosylated (N-linked (GlcNAc...) asparagine). The region spanning Thr-244–Ile-419 is the GAIN-B domain. Disulfide bonds link Cys-370-Cys-401 and Cys-389-Cys-403. The GPS stretch occupies residues Cys-370–Ile-419. The helical transmembrane segment at Leu-433–Ser-453 threads the bilayer. The Cytoplasmic portion of the chain corresponds to Glu-454–Thr-460. A helical membrane pass occupies residues Thr-461–Ile-481. Residues Asn-482–Tyr-499 lie on the Extracellular side of the membrane. A helical transmembrane segment spans residues Phe-500–Val-520. Residues Gly-521–Asn-532 lie on the Cytoplasmic side of the membrane. The helical transmembrane segment at Phe-533 to Tyr-553 threads the bilayer. Residues Arg-554–Ser-573 lie on the Extracellular side of the membrane. A helical transmembrane segment spans residues Phe-574–Tyr-594. The Cytoplasmic segment spans residues Lys-595–Arg-618. The chain crosses the membrane as a helical span at residues Gly-619 to Val-639. Over His-640–Ala-646 the chain is Extracellular. Residues Tyr-647–Leu-667 traverse the membrane as a helical segment. The Cytoplasmic portion of the chain corresponds to Ser-668–Arg-690.

Belongs to the G-protein coupled receptor 2 family. Adhesion G-protein coupled receptor (ADGR) subfamily. Heterodimer of 2 chains generated by proteolytic processing; the large extracellular N-terminal fragment and the membrane-bound C-terminal fragment predominantly remain associated and non-covalently linked. Post-translationally, glycosylated. In terms of processing, proteolytically cleaved into 2 subunits, an extracellular alpha subunit and a seven-transmembrane subunit. In terms of tissue distribution, detected in the majority of epithelial cells in tumor and normal tissues. Expressed also in human umbilical vein endothelial cells.

The protein localises to the cell membrane. In terms of biological role, endothelial orphan receptor that acts as a key regulator of angiogenesis. This is Adhesion G protein-coupled receptor L4 from Homo sapiens (Human).